Here is a 435-residue protein sequence, read N- to C-terminus: Solute carrier family 38 member 8 (435 aa).

Helical transmembrane passes span 29-49 (AVFILMKSALGAGLLNFPWAF), 55-75 (VVPAFLVELVSLVFLISGLVI), 100-120 (IGKLCEACFLLNLLMISVAFL), 151-171 (FTLPLLSVLVILPLSAPREIA), 178-198 (ILGTLAACYLALVITVQYYLW), 218-240 (VFSVFPTICFGFQCHEAAVSIYC), 250-270 (WALVSVLSLLACCLIYSLTGV), 295-315 (IIVARVLFAVSIVTVYPIVLF), 348-368 (MPLTILWVTVTLAMALFMPDL), 374-394 (IIGGISSFFIFIFPGLCLICA), and 410-430 (VWGVVSVLVGTFIFGQSTAAA).

This sequence belongs to the amino acid/polyamine transporter 2 family. As to expression, expressed in fetal and adult brain, and spinal cord. In the brain, it is localized in the cell body and axon of the majority of neuronal cells and in a subset of glial cells. Found throughout the neuronal retina, with higher expression levels in the inner and outer plexiform layers and the photoreceptor layer. Very weak expression is also present in the kidneys, thymus, and testes.

It localises to the membrane. Its subcellular location is the cytoplasm. The protein localises to the cell cortex. The protein resides in the cell projection. It is found in the axon. It catalyses the reaction L-glutamine(out) = L-glutamine(in). The enzyme catalyses L-alanine(in) = L-alanine(out). The catalysed reaction is L-histidine(out) = L-histidine(in). It carries out the reaction L-aspartate(out) = L-aspartate(in). It catalyses the reaction L-arginine(in) = L-arginine(out). The enzyme catalyses L-leucine(in) = L-leucine(out). Its function is as follows. Electrogenic sodium-dependent amino acid transporter with a preference for L-glutamine, L-alanine, L-histidine, L-aspartate and L-arginine. May facilitate glutamine uptake in both excitatory and inhibitory neurons. The transport mechanism and stoichiometry remain to be elucidated. This is Solute carrier family 38 member 8 from Homo sapiens (Human).